The sequence spans 156 residues: Transcription antitermination protein NusB (156 aa).

This sequence belongs to the NusB family.

Functionally, involved in transcription antitermination. Required for transcription of ribosomal RNA (rRNA) genes. Binds specifically to the boxA antiterminator sequence of the ribosomal RNA (rrn) operons. The polypeptide is Transcription antitermination protein NusB (Rickettsia conorii (strain ATCC VR-613 / Malish 7)).